The sequence spans 360 residues: Phospho-N-acetylmuramoyl-pentapeptide-transferase (360 aa).

The Periplasmic portion of the chain corresponds to 1–25; that stretch reads MLVWLAEHLVKYYSGFNVFSYLTFR. A helical membrane pass occupies residues 26 to 46; it reads AIVSLLTALFISLWMGPRMIA. Residues 47-71 are Cytoplasmic-facing; it reads RLQKLSFGQVVRNDGPESHFSKRGT. A helical membrane pass occupies residues 72–92; the sequence is PTMGGIMILTAIVISVLLWAY. A topological domain (periplasmic) is located at residue proline 93. A helical membrane pass occupies residues 94 to 114; sequence SNPYVWCVLVVLIGYGIIGFV. Topologically, residues 115–131 are cytoplasmic; that stretch reads DDYRKVVRKDTKGLIAR. Residues 132–152 form a helical membrane-spanning segment; it reads WKYFWMSVIALGVAFALYLVG. The Periplasmic segment spans residues 153 to 167; it reads KDTPATQLVVPFFKD. A helical transmembrane segment spans residues 168 to 188; sequence VMPQLGLFYILLSYFVIVGTG. Topologically, residues 189–198 are cytoplasmic; that stretch reads NAVNLTDGLD. Residues 199 to 219 traverse the membrane as a helical segment; the sequence is GLAIMPTVFVAAGFALVAWAT. Over 220-235 the chain is Periplasmic; that stretch reads GNMNFANYLHIPYLRH. A helical membrane pass occupies residues 236–256; sequence AGELVIVCTAIVGAGLGFLWF. Over 257–262 the chain is Cytoplasmic; sequence NTYPAQ. Residues 263-283 form a helical membrane-spanning segment; sequence VFMGDVGSLALGGALGIIAVL. Residues 284-287 are Periplasmic-facing; the sequence is LRQE. A helical transmembrane segment spans residues 288 to 308; sequence FLLVIMGGVFVVETLSVILQV. Residues 309–337 are Cytoplasmic-facing; that stretch reads GSFKLRGQRIFRMAPIHHHYELKGWPEPR. Residues 338 to 358 traverse the membrane as a helical segment; that stretch reads VIVRFWIISLMLVLIGLATLK. Over 359–360 the chain is Periplasmic; it reads VR.

It belongs to the glycosyltransferase 4 family. MraY subfamily. Requires Mg(2+) as cofactor.

The protein resides in the cell inner membrane. It carries out the reaction UDP-N-acetyl-alpha-D-muramoyl-L-alanyl-gamma-D-glutamyl-meso-2,6-diaminopimeloyl-D-alanyl-D-alanine + di-trans,octa-cis-undecaprenyl phosphate = di-trans,octa-cis-undecaprenyl diphospho-N-acetyl-alpha-D-muramoyl-L-alanyl-D-glutamyl-meso-2,6-diaminopimeloyl-D-alanyl-D-alanine + UMP. Its pathway is cell wall biogenesis; peptidoglycan biosynthesis. Catalyzes the initial step of the lipid cycle reactions in the biosynthesis of the cell wall peptidoglycan: transfers peptidoglycan precursor phospho-MurNAc-pentapeptide from UDP-MurNAc-pentapeptide onto the lipid carrier undecaprenyl phosphate, yielding undecaprenyl-pyrophosphoryl-MurNAc-pentapeptide, known as lipid I. This is Phospho-N-acetylmuramoyl-pentapeptide-transferase from Salmonella agona (strain SL483).